Here is a 265-residue protein sequence, read N- to C-terminus: Gap junction beta-4 protein (265 aa).

Residues 2-13 (NWGFLQGILSGV) lie within the membrane without spanning it. Residues 14 to 20 (NKYSTAL) lie on the Cytoplasmic side of the membrane. A helical transmembrane segment spans residues 21-40 (GRIWLSVVFIFRVLVYVVAA). At 41–73 (EEVWDDEQKDFICNTKQPGCPNVCYDEFFPVSH) the chain is on the extracellular side. 3 disulfides stabilise this stretch: Cys53–Cys175, Cys60–Cys169, and Cys64–Cys164. Residues 74-94 (VRLWALQLILVTCPSLLVVMH) form a helical membrane-spanning segment. The Cytoplasmic segment spans residues 95 to 130 (VAYREERERKHRLKHGPDAPALYSNLSKKRGGLWWT). The chain crosses the membrane as a helical span at residues 131-151 (YLLSLIFKAAVDSGFLYIFHC). Residues 152–184 (IYKDYDMPRVVACSVQPCPHTVDCYISRPTEKK) lie on the Extracellular side of the membrane. Residues 185 to 205 (VFTYFMVVTAAICILLNLSEV) traverse the membrane as a helical segment. Over 206–265 (AYLVGKRCMEVFRPRRQKTSRRHQLPDTCPPYVISKGHPQDESTVLTKAGMATVDAGVYP) the chain is Cytoplasmic.

It belongs to the connexin family. Beta-type (group I) subfamily. A hemichannel or connexon is composed of a hexamer of connexins. A functional gap junction is formed by the apposition of two hemichannels. Forms heteromeric channels with GJB2. As to expression, detected in adult heart, kidney, skin and cochlea, where it is detected in spiral ganglion, stria vascularis, spiral limbus and spiral ligament (at protein level).

It localises to the cell membrane. The protein resides in the cell junction. It is found in the gap junction. Structural component of gap junctions. Gap junctions are dodecameric channels that connect the cytoplasm of adjoining cells. They are formed by the docking of two hexameric hemichannels, one from each cell membrane. Small molecules and ions diffuse from one cell to a neighboring cell via the central pore. This Rattus norvegicus (Rat) protein is Gap junction beta-4 protein (Gjb4).